The chain runs to 602 residues: Probable beta-glucosidase btgE (602 aa).

Residues 1–18 (MRGAFLAAAAAVAGTAMA) form the signal peptide. Disordered regions lie at residues 61–94 (PPTLVPINTPAPEPSSSSSSEVPSVPSSESSVVT) and 116–166 (GVDA…TSFS). Over residues 74–94 (PSSSSSSEVPSVPSSESSVVT) the composition is skewed to low complexity. Polar residues predominate over residues 152-166 (TSESPLPTPGVTSFS). Catalysis depends on E443, which acts as the Proton donor. E538 functions as the Nucleophile in the catalytic mechanism.

This sequence belongs to the glycosyl hydrolase 17 family.

It is found in the secreted. The protein resides in the cell wall. It carries out the reaction Hydrolysis of terminal, non-reducing beta-D-glucosyl residues with release of beta-D-glucose.. The protein operates within glycan metabolism; cellulose degradation. In terms of biological role, beta-glucosidases are one of a number of cellulolytic enzymes involved in the degradation of cellulosic biomass. Catalyzes the last step releasing glucose from the inhibitory cellobiose. This is Probable beta-glucosidase btgE (btgE) from Aspergillus flavus (strain ATCC 200026 / FGSC A1120 / IAM 13836 / NRRL 3357 / JCM 12722 / SRRC 167).